A 266-amino-acid polypeptide reads, in one-letter code: Small ribosomal subunit protein eS1 (266 aa).

A disordered region spans residues 235 to 266 (GGAGGAAKASGDDTGAKVERADGYEPPIQETV). Residues 244-257 (SGDDTGAKVERADG) show a composition bias toward basic and acidic residues.

It belongs to the eukaryotic ribosomal protein eS1 family. As to quaternary structure, component of the small ribosomal subunit. Mature ribosomes consist of a small (40S) and a large (60S) subunit. The 40S subunit contains about 33 different proteins and 1 molecule of RNA (18S). The 60S subunit contains about 49 different proteins and 3 molecules of RNA (28S, 5.8S and 5S).

The protein localises to the cytoplasm. Its function is as follows. Component of the small ribosomal subunit. The ribosome is a large ribonucleoprotein complex responsible for the synthesis of proteins in the cell. The chain is Small ribosomal subunit protein eS1 (rps3a) from Oryzias latipes (Japanese rice fish).